The chain runs to 147 residues: Hemoglobin subunit epsilon (147 aa).

Residues 3-147 (HFTAEEKNAI…VANALAHKYH (145 aa)) enclose the Globin domain. Residue Ser51 is modified to Phosphoserine. Positions 64 and 93 each coordinate heme b.

It belongs to the globin family. In terms of assembly, heterotetramer of two alpha chains and two epsilon chains in early embryonic hemoglobin Gower-2; two zeta chains and two epsilon chains in early embryonic hemoglobin Gower-1. Red blood cells.

Its function is as follows. The epsilon chain is a beta-type chain of early mammalian embryonic hemoglobin. This Sminthopsis crassicaudata (Fat-tailed dunnart) protein is Hemoglobin subunit epsilon (HBE1).